The primary structure comprises 128 residues: Holo-[acyl-carrier-protein] synthase (128 aa).

Residues Asp-8 and Glu-57 each coordinate Mg(2+).

The protein belongs to the P-Pant transferase superfamily. AcpS family. Mg(2+) serves as cofactor.

It localises to the cytoplasm. The catalysed reaction is apo-[ACP] + CoA = holo-[ACP] + adenosine 3',5'-bisphosphate + H(+). Transfers the 4'-phosphopantetheine moiety from coenzyme A to a Ser of acyl-carrier-protein. This chain is Holo-[acyl-carrier-protein] synthase, found in Syntrophus aciditrophicus (strain SB).